A 342-amino-acid chain; its full sequence is NADH-ubiquinone oxidoreductase chain 2 (342 aa).

A run of 9 helical transmembrane segments spans residues 25–45 (TPWL…IPML), 58–78 (IKYF…ILII), 94–114 (MMIM…FWLP), 146–166 (MSSF…MGGL), 174–194 (ILAY…TISE), 195–215 (NTWE…IFMF), 238–258 (FMMM…GFLP), 274–294 (LVLL…RISF), and 316–336 (VVAL…TSNF).

The protein belongs to the complex I subunit 2 family.

It localises to the mitochondrion inner membrane. The catalysed reaction is a ubiquinone + NADH + 5 H(+)(in) = a ubiquinol + NAD(+) + 4 H(+)(out). Its function is as follows. Core subunit of the mitochondrial membrane respiratory chain NADH dehydrogenase (Complex I) that is believed to belong to the minimal assembly required for catalysis. Complex I functions in the transfer of electrons from NADH to the respiratory chain. The immediate electron acceptor for the enzyme is believed to be ubiquinone. This Locusta migratoria (Migratory locust) protein is NADH-ubiquinone oxidoreductase chain 2 (ND2).